The primary structure comprises 649 residues: MEHHKPLLPTSSHAAPTSSTRKDLLFVLCGLLFLSSLVAYGGYRASGVPHAHLSSPTSNHQQDHQSPTSLPSSKWYPVSRGVSSGVSEKSSNLLFAGEGGASEAFPWDNSMLSWQRTSFHFQPEKNWMNDPNGPMYYKGWYHFFYQYNPNGAVWGDIVWGHAVSRDMIHWLHLPLAMVADQWYDKQGVWTGSATILPNGEIIMLYTGSTNESVQVQNLAYPADPSDPLLLDWIKHTGNPVLVPPPGIGAKDFRDPTTAWLTSEGKWRITIGSKLNKTGIALVYDTEDFKTYELKEGLLRAVPGTGMWECVDFFPVSKKNGNGLDTSVNGAEVKHVMKVSLDDDRHDYYAIGTYDDNKVLFTPDDVKNDVGVGLRYDYGIFYASKTFYDQNKDRRILWGWIGESDSEYADVTKGWASVQSIPRTVRLDTKTGSNLLQWPVDEVESLRLRSDEFKSLKAKPGSVVSLDIETATQLDVVAEFEIDTESLEKTAESNEEFTCSSSGGAAQRGALGPFGLLVLADEGLSEYTPVYFYVIKGRNGNLRTSFCSDQSRSSQANDVRKQIFGSVVPVLKGEKFSLRMLVDHSIVESFAQGGRTCVTSRVYPTKAIYGAARLFLFNNATEATVTASLKVWQMNSAFIRPFPFNPDQKS.

Over 1–22 (MEHHKPLLPTSSHAAPTSSTRK) the chain is Cytoplasmic. Positions 1–101 (MEHHKPLLPT…NLLFAGEGGA (101 aa)) are cleaved as a propeptide — removed in mature form. The chain crosses the membrane as a helical; Signal-anchor for type II membrane protein span at residues 23-43 (DLLFVLCGLLFLSSLVAYGGY). Residues 44-649 (RASGVPHAHL…PFPFNPDQKS (606 aa)) are Lumenal-facing. Residues 52–75 (HLSSPTSNHQQDHQSPTSLPSSKW) form a disordered region. Positions 54–72 (SSPTSNHQQDHQSPTSLPS) are enriched in polar residues. Residues 127–130 (WMND), glutamine 146, tryptophan 154, and 189–190 (WT) contribute to the substrate site. Aspartate 130 is a catalytic residue. Residue asparagine 210 is glycosylated (N-linked (GlcNAc...) (complex) asparagine). Residue 253 to 254 (RD) participates in substrate binding. Residue asparagine 275 is glycosylated (N-linked (GlcNAc...) (complex) asparagine). Substrate contacts are provided by glutamate 308 and aspartate 341. An intrachain disulfide couples cysteine 498 to cysteine 546. The N-linked (GlcNAc...) (high mannose) asparagine glycan is linked to asparagine 618.

This sequence belongs to the glycosyl hydrolase 32 family. In terms of assembly, present in two forms, a 70 kDa monomer and a heterodimer of the 30 kDa and 38 kDa subunits. The ratio of the levels of the two forms within cells appears to be regulated developmentally.

It localises to the membrane. The protein resides in the vacuole lumen. The enzyme catalyses Hydrolysis of terminal non-reducing beta-D-fructofuranoside residues in beta-D-fructofuranosides.. The protein operates within glycan biosynthesis; sucrose metabolism. Possible role in the continued mobilization of sucrose to sink organs. The polypeptide is Acid beta-fructofuranosidase (INVA) (Vigna radiata var. radiata (Mung bean)).